The following is a 656-amino-acid chain: Rab proteins geranylgeranyltransferase component A 2 (656 aa).

Disordered regions lie at residues 188-209 (MHTV…EDKA) and 609-656 (PPPN…HLQN). Residues 639–656 (ESSEESKNLESPEKHLQN) show a composition bias toward basic and acidic residues. The residue at position 649 (Ser649) is a Phosphoserine.

This sequence belongs to the Rab GDI family. Monomer. Heterotrimer composed of RABGGTA, RABGGTB and CHML; within this trimer, RABGGTA and RABGGTB form the catalytic component B, while CHML (component A) mediates Rab protein binding. Interacts with RAB1A, RAB7A and RAB27A, but has much lower affinity for RAB1A, RAB7A and RAB27A than CHM. Interacts with the non-phosphorylated forms of RAB3A, RAB3B, RAB3C, RAB3D, RAB5B, RAB5C, RAB8A, RAB8B, RAB10, RAB12, RAB35, and RAB43.

It is found in the cytoplasm. The protein localises to the cytosol. Functionally, substrate-binding subunit (component A) of the Rab geranylgeranyltransferase (GGTase) complex. Binds unprenylated Rab proteins and presents the substrate peptide to the catalytic component B. The component A is thought to be regenerated by transferring its prenylated Rab back to the donor membrane. Less effective than CHM in supporting prenylation of Rab3 family. This is Rab proteins geranylgeranyltransferase component A 2 (CHML) from Homo sapiens (Human).